The sequence spans 267 residues: 2-keto-3-deoxy-L-rhamnonate aldolase (267 aa).

The active-site Proton acceptor is histidine 49. Glutamine 151 lines the substrate pocket. Glutamate 153 contributes to the Mg(2+) binding site. Positions 178 and 179 each coordinate substrate. Aspartate 179 lines the Mg(2+) pocket.

Belongs to the HpcH/HpaI aldolase family. KDR aldolase subfamily. Homohexamer. Mg(2+) is required as a cofactor.

The catalysed reaction is 2-dehydro-3-deoxy-L-rhamnonate = (S)-lactaldehyde + pyruvate. In terms of biological role, catalyzes the reversible retro-aldol cleavage of 2-keto-3-deoxy-L-rhamnonate (KDR) to pyruvate and lactaldehyde. This Salmonella typhi protein is 2-keto-3-deoxy-L-rhamnonate aldolase.